The primary structure comprises 215 residues: Rho-related GTP-binding protein RhoF (215 aa).

Methionine 1 carries the post-translational modification N-acetylmethionine. 30–37 contributes to the GTP binding site; sequence GDGGCGKT. The Effector region motif lies at 52 to 60; sequence YAPSVFEKY. GTP contacts are provided by residues 77–81 and 135–138; these read DTAGQ and CKTD. Cysteine methyl ester is present on cysteine 212. Cysteine 212 is lipidated: S-geranylgeranyl cysteine. Positions 213-215 are cleaved as a propeptide — removed in mature form; the sequence is LLL.

Belongs to the small GTPase superfamily. Rho family.

Its subcellular location is the cell membrane. The protein resides in the cytoplasm. It is found in the cytoskeleton. Functionally, plasma membrane-associated small GTPase which cycles between an active GTP-bound and an inactive GDP-bound state. Causes the formation of thin, actin-rich surface projections called filopodia. Functions cooperatively with CDC42 and Rac to generate additional structures, increasing the diversity of actin-based morphology. The chain is Rho-related GTP-binding protein RhoF (RHOF) from Bos taurus (Bovine).